The sequence spans 175 residues: NADH-ubiquinone oxidoreductase chain 6 (175 aa).

5 helical membrane-spanning segments follow: residues 1–21 (MMTY…VGFS), 25–45 (SPIY…GIVL), 47–67 (FGGS…MLVV), 88–108 (AVLG…CYIL), and 149–169 (YGTW…LVIM).

This sequence belongs to the complex I subunit 6 family. In terms of assembly, core subunit of respiratory chain NADH dehydrogenase (Complex I) which is composed of 45 different subunits.

The protein resides in the mitochondrion inner membrane. It carries out the reaction a ubiquinone + NADH + 5 H(+)(in) = a ubiquinol + NAD(+) + 4 H(+)(out). Its function is as follows. Core subunit of the mitochondrial membrane respiratory chain NADH dehydrogenase (Complex I) which catalyzes electron transfer from NADH through the respiratory chain, using ubiquinone as an electron acceptor. Essential for the catalytic activity and assembly of complex I. This Halichoerus grypus (Gray seal) protein is NADH-ubiquinone oxidoreductase chain 6 (MT-ND6).